The following is a 200-amino-acid chain: Molybdenum cofactor guanylyltransferase (200 aa).

GTP contacts are provided by residues 15–17 (LSG), Lys28, Asp74, and Asp104. Residue Asp104 coordinates Mg(2+).

This sequence belongs to the MobA family. In terms of assembly, monomer. Mg(2+) serves as cofactor.

The protein resides in the cytoplasm. The enzyme catalyses Mo-molybdopterin + GTP + H(+) = Mo-molybdopterin guanine dinucleotide + diphosphate. Its function is as follows. Transfers a GMP moiety from GTP to Mo-molybdopterin (Mo-MPT) cofactor (Moco or molybdenum cofactor) to form Mo-molybdopterin guanine dinucleotide (Mo-MGD) cofactor. In Pseudomonas fluorescens (strain SBW25), this protein is Molybdenum cofactor guanylyltransferase.